We begin with the raw amino-acid sequence, 307 residues long: Cyclin-dependent kinase 5 activator 1 (307 aa).

Gly2 carries the N-myristoyl glycine lipid modification. Ser8 is modified (phosphoserine; by CDK5). A disordered region spans residues 97–135 (TFAQPPPAQPPAPPASQLSGSQTGVSSSVKKAPHPAVSS). A compositionally biased stretch (pro residues) spans 100–110 (QPPPAQPPAPP). The segment covering 112 to 125 (SQLSGSQTGVSSSV) has biased composition (polar residues). At Thr138 the chain carries Phosphothreonine; by CDK5.

Belongs to the cyclin-dependent kinase 5 activator family. In terms of assembly, heterodimer composed of a catalytic subunit CDK5 and a regulatory subunit CDK5R1 (p25) and macromolecular complex composed of at least CDK5, CDK5R1 (p35) and CDK5RAP1 or CDK5RAP2 or CDK5RAP3. Only the heterodimer shows kinase activity. Interacts with EPHA4 and NGEF; may mediate the activation of NGEF by EPHA4. Interacts with RASGRF2. The complex p35/CDK5 interacts with CLOCK. Post-translationally, the p35 form is proteolytically cleaved by calpain, giving rise to the p25 form. P35 has a 5 to 10 fold shorter half-life compared to p25. The conversion results in deregulation of the CDK5 kinase: p25/CDK5 kinase displays an increased and altered tau phosphorylation in comparison to the p35/CDK5 kinase in vivo. In terms of processing, myristoylated. A proper myristoylation signal is essential for the proper distribution of p35. Phosphorylation at Ser-8 and Thr-138 by CDK5 prevents calpain-mediated proteolysis. Post-translationally, ubiquitinated, leading to its degradation: degradation of p35 by proteasome results in down-regulation of CDK5 activity. During this process, CDK5 phosphorylates p35 and induces its ubiquitination and subsequent degradation. Ubiquitinated by the CRL2(FEM1B) complex, which recognizes the -Gly-Leu-Asp-Arg C-degron at the C-terminus, leading to its degradation. In terms of tissue distribution, brain and neuron specific.

The protein resides in the cell membrane. Its subcellular location is the cell projection. It localises to the neuron projection. The protein localises to the nucleus. It is found in the cytoplasm. The protein resides in the perinuclear region. Its subcellular location is the perikaryon. In terms of biological role, p35 is a neuron specific activator of CDK5. The complex p35/CDK5 is required for neurite outgrowth and cortical lamination. Involved in dendritic spine morphogenesis by mediating the EFNA1-EPHA4 signaling. Activator of TPKII. The complex p35/CDK5 participates in the regulation of the circadian clock by modulating the function of CLOCK protein: phosphorylates CLOCK at 'Thr-451' and 'Thr-461' and regulates the transcriptional activity of the CLOCK-BMAL1 heterodimer in association with altered stability and subcellular distribution. The sequence is that of Cyclin-dependent kinase 5 activator 1 (CDK5R1) from Bos taurus (Bovine).